The sequence spans 421 residues: Proton/sodium-glutamate symport protein (421 aa).

Topologically, residues 1 to 3 (MRK) are cytoplasmic. A helical transmembrane segment spans residues 4-24 (IGLAWQIFIGLILGIIVGAIF). The Extracellular segment spans residues 25–43 (YGNPKVATYLQPIGDIFLR). Residues 44-64 (LIKMIVIPIVISSLVVGVASV) traverse the membrane as a helical segment. At 65 to 77 (GDLKKLGKLGGKT) the chain is on the cytoplasmic side. A helical transmembrane segment spans residues 78-98 (IIYFEIITTIAIVVGLLAANI). At 99-148 (FQPGTGVNMKSLEKTDIQSYVDTTNEVQHHSMVETFVNIVPKNIFESLTK) the chain is on the extracellular side. The helical transmembrane segment at 149–169 (GDMLPIIFFSVMFGLGVAAIG) threads the bilayer. Residues 170-198 (EKGKPVLQFFQGTAEAMFYVTNQIMKFAP) lie on the Cytoplasmic side of the membrane. A helical transmembrane segment spans residues 199-219 (FGVFALIGVTVSKFGVESLIP). Topologically, residues 220–222 (LSK) are extracellular. A helical transmembrane segment spans residues 223–243 (LVIVVYATMVFFIFVVLGGVA). Position 244 (K244) is a topological domain, cytoplasmic. The chain crosses the membrane as a helical span at residues 245 to 265 (LFGINIFHIIKILKDELILAY). The Extracellular segment spans residues 266–306 (STASSETVLPKIMEKMENFGCPKAITSFVIPTGYSFNLDGS). The chain crosses the membrane as a helical span at residues 307–327 (TLYQALAAIFIAQLYGIDMPI). The Cytoplasmic segment spans residues 328 to 330 (SQQ). 2 consecutive transmembrane segments (helical) span residues 331 to 351 (ISLL…PGVS) and 352 to 372 (FVVL…LAFI). At 373-421 (AGIDRILDMARTAVNVIGNSLAAIIMSKWEGQYNEEKGKQYIAQLQQSA) the chain is on the cytoplasmic side.

The protein belongs to the dicarboxylate/amino acid:cation symporter (DAACS) (TC 2.A.23) family. Homotrimer.

It is found in the cell membrane. Functionally, this carrier protein is part of the Na(+)-dependent, binding-protein-independent glutamate-aspartate transport system. The polypeptide is Proton/sodium-glutamate symport protein (gltT) (Geobacillus stearothermophilus (Bacillus stearothermophilus)).